Consider the following 638-residue polypeptide: Actin-regulating kinase 1 (638 aa).

The region spanning 22 to 298 (VEIIKYLTSG…VYQLLKRISI (277 aa)) is the Protein kinase domain. ATP-binding positions include 28–36 (LTSGGFAQV) and Lys-56. Catalysis depends on Asp-159, which acts as the Proton acceptor. Ser-478 bears the Phosphoserine mark. Over residues 482–515 (YSTRGNIKKNQSVKESLTSSSLPGTSFTPTSTKV) the composition is skewed to polar residues. Residues 482–518 (YSTRGNIKKNQSVKESLTSSSLPGTSFTPTSTKVNLK) form a disordered region. Residues Ser-522 and Ser-535 each carry the phosphoserine modification. The tract at residues 569 to 638 (SEESFNARKM…LAGRKLSLDK (70 aa)) is disordered. The segment covering 582–593 (KLHEKGEIDKPT) has biased composition (basic and acidic residues). Positions 602–615 (SKDKKTKPTPPPKP) are interaction with SH3 domain of ABP1.

Belongs to the protein kinase superfamily. Ser/Thr protein kinase family. Interacts with ABP1, which is required for proper actin patch localization.

It is found in the cytoplasm. Its subcellular location is the cytoskeleton. It localises to the actin patch. The enzyme catalyses L-seryl-[protein] + ATP = O-phospho-L-seryl-[protein] + ADP + H(+). The catalysed reaction is L-threonyl-[protein] + ATP = O-phospho-L-threonyl-[protein] + ADP + H(+). Involved in regulation of actin cytoskeleton organization and endocytosis. This is Actin-regulating kinase 1 (ARK1) from Saccharomyces cerevisiae (strain ATCC 204508 / S288c) (Baker's yeast).